Reading from the N-terminus, the 505-residue chain is Cyclin-dependent kinase C-1 (505 aa).

Residues 26 to 325 (FEKLEQIGEG…AKDALDAEYF (300 aa)) form the Protein kinase domain. Residues 32–40 (IGEGTYGQV) and K55 each bind ATP. Residue Y37 is modified to Phosphotyrosine. The Proton acceptor role is filled by D164. At T198 the chain carries Phosphothreonine. Residues 336–505 (SLPTYESSHE…QRNQQYGWQQ (170 aa)) form a disordered region. A compositionally biased stretch (low complexity) spans 429–456 (PPSGNQSGGYNQSRGGYSSGSYPPQGRG). A compositionally biased stretch (gly residues) spans 482–491 (GQYGGSGSSG). Low complexity predominate over residues 492–505 (RGQNQRNQQYGWQQ).

This sequence belongs to the protein kinase superfamily. CMGC Ser/Thr protein kinase family. CDC2/CDKX subfamily. As to quaternary structure, interacts with CYCT1-3. In terms of tissue distribution, highly expressed in flowers. Expressed in seedlings, roots, rosettes and stems.

It catalyses the reaction L-seryl-[protein] + ATP = O-phospho-L-seryl-[protein] + ADP + H(+). The enzyme catalyses L-threonyl-[protein] + ATP = O-phospho-L-threonyl-[protein] + ADP + H(+). The catalysed reaction is [DNA-directed RNA polymerase] + ATP = phospho-[DNA-directed RNA polymerase] + ADP + H(+). This is Cyclin-dependent kinase C-1 (CDKC-1) from Arabidopsis thaliana (Mouse-ear cress).